Reading from the N-terminus, the 648-residue chain is MAAGVATWLPFARAAAVGWLPLAQQPLPPAPGVKASRGDEVLVVNVSGRRFETWKNTLDRYPDTLLGSSEKEFFYNADSGEYFFDRDPDMFRHVLNFYRTGRLHCPRQECIQAFDEELAFYGLVPELVGDCCLEEYRDRKKENAERLAEDEEAEQAGDGPTLPAGSSLRQRLWRAFENPHTSTAALVFYYVTGFFIAVSVIANVVETIPCRSPTRRPPREQPCGDRFPLAFFCMDTACVLIFTGEYLLRLFAAPSRCRFLRSVMSLIDVVAILPYYIGLFMPKNEDVSGAFVTLRVFRVFRIFKFSRHSQGLRILGYTLKSCASELGFLLFSLTMAIIIFATVMFYAEKGTNKTNFTSIPAAFWYTIVTMTTLGYGDMVPSTIAGKIFGSICSLSGVLVIALPVPVIVSNFSRIYHQNQRADKRRAQQKVRLARIRLAKSGTTNAFLQYKQNGSLEDSGGGEEQALCVRNRSAFEQQHHHLLHCLEKTTCHEFTDELTFSEALGAVSLGSRTSRSTSVSSQPVGAGSLLSSCCPRRAKRRAIRLANSTASVSRGSMQELDTLAGLRRSPAPQSRSSLNAKPHDSLDLTCDSRDFVAAIISIPTPPANTPDESQPSSPGGGGGGASSTLRNSSLGTPCLLPETVKISSL.

Topologically, residues 1–183 (MAAGVATWLP…RAFENPHTST (183 aa)) are cytoplasmic. The interval 2–20 (AAGVATWLPFARAAAVGWL) is interaction with KCNIP1, KCNIP2, and other family members. The interval 2-20 (AAGVATWLPFARAAAVGWL) is interaction with KCNIP2. Residues His104, Cys131, and Cys132 each contribute to the Zn(2+) site. Residues 144 to 164 (AERLAEDEEAEQAGDGPTLPA) form a disordered region. The helical transmembrane segment at 184–205 (AALVFYYVTGFFIAVSVIANVV) threads the bilayer. At 206 to 230 (ETIPCRSPTRRPPREQPCGDRFPLA) the chain is on the extracellular side. A helical membrane pass occupies residues 231–252 (FFCMDTACVLIFTGEYLLRLFA). Residues 253–263 (APSRCRFLRSV) are Cytoplasmic-facing. The helical transmembrane segment at 264-284 (MSLIDVVAILPYYIGLFMPKN) threads the bilayer. The Extracellular segment spans residues 285–287 (EDV). The helical; Voltage-sensor transmembrane segment at 288–308 (SGAFVTLRVFRVFRIFKFSRH) threads the bilayer. Residues 309–323 (SQGLRILGYTLKSCA) lie on the Cytoplasmic side of the membrane. Residues 310-323 (QGLRILGYTLKSCA) form an S4-S5 linker region. A helical membrane pass occupies residues 324–345 (SELGFLLFSLTMAIIIFATVMF). The Extracellular portion of the chain corresponds to 346–359 (YAEKGTNKTNFTSI). 2 N-linked (GlcNAc...) asparagine glycosylation sites follow: Asn352 and Asn355. Positions 360-371 (PAAFWYTIVTMT) form an intramembrane region, helical. A Selectivity filter motif is present at residues 372-377 (TLGYGD). Residues 372 to 379 (TLGYGDMV) lie within the membrane without spanning it. Residues 380–386 (PSTIAGK) lie on the Extracellular side of the membrane. Residues 387 to 415 (IFGSICSLSGVLVIALPVPVIVSNFSRIY) traverse the membrane as a helical segment. Residues 416–648 (HQNQRADKRR…LPETVKISSL (233 aa)) are Cytoplasmic-facing. Ser458 is modified (phosphoserine). A mediates dendritic targeting region spans residues 474 to 489 (FEQQHHHLLHCLEKTT). The tract at residues 474–489 (FEQQHHHLLHCLEKTT) is required for dendritic targeting. Ser555 is modified (phosphoserine). Residues 601–636 (IPTPPANTPDESQPSSPGGGGGGASSTLRNSSLGTP) form a disordered region.

This sequence belongs to the potassium channel family. D (Shal) (TC 1.A.1.2) subfamily. Kv4.1/KCND1 sub-subfamily. As to quaternary structure, component of heteromultimeric potassium channels. Identified in potassium channel complexes containing KCND1, KCND2, KCND3, KCNIP1, KCNIP2, KCNIP3, KCNIP4, DPP6 and DPP10.

The protein resides in the cell membrane. The catalysed reaction is K(+)(in) = K(+)(out). A-type voltage-gated potassium channel that mediates transmembrane potassium transport in excitable membranes in the brain. Mediates A-type current I(SA) in suprachiasmatic nucleus (SCN) neurons. Exhibits a low-threshold A-type current with a hyperpolarized steady-state inactivation midpoint and the recovery process was steeply voltage-dependent, with recovery being markedly faster at more negative potentials. May regulates repetitive firing rates in the suprachiasmatic nucleus (SCN) neurons and circadian rhythms in neuronal excitability and behavior. Contributes to the regulation of the circadian rhythm of action potential firing in suprachiasmatic nucleus neurons, which regulates the circadian rhythm of locomotor activity. The regulatory subunit KCNIP1 modulates the kinetics of channel inactivation, increases the current amplitudes and accelerates recovery from inactivation, shifts activation in a depolarizing direction. The regulatory subunit DPP10 decreases the voltage sensitivity of the inactivation channel gating. This is A-type voltage-gated potassium channel KCND1 from Bos taurus (Bovine).